The sequence spans 119 residues: Chorion class B protein M2807 (119 aa).

A left arm region spans residues 1 to 11 (GGLGGGCGRGF). The central domain stretch occupies residues 12 to 80 (SGGGLPVATA…GNGAVGITRE (69 aa)). The interval 81–119 (GGLGYGAGYGDGYGLGYGGYGGGYGLGYGGYGGCGCGCG) is right arm (Gly-rich tandem repeats).

It belongs to the chorion protein family.

In terms of biological role, this protein is one of many from the eggshell of the silk moth. This chain is Chorion class B protein M2807, found in Bombyx mori (Silk moth).